A 346-amino-acid polypeptide reads, in one-letter code: Elongation factor Ts (346 aa).

An involved in Mg(2+) ion dislocation from EF-Tu region spans residues 80–83 (TDFV).

Belongs to the EF-Ts family.

It is found in the cytoplasm. Its function is as follows. Associates with the EF-Tu.GDP complex and induces the exchange of GDP to GTP. It remains bound to the aminoacyl-tRNA.EF-Tu.GTP complex up to the GTP hydrolysis stage on the ribosome. This is Elongation factor Ts (tsf) from Streptococcus pneumoniae (strain ATCC BAA-255 / R6).